Here is a 281-residue protein sequence, read N- to C-terminus: 2-dehydro-3-deoxyphosphooctonate aldolase (281 aa).

This sequence belongs to the KdsA family.

It is found in the cytoplasm. The enzyme catalyses D-arabinose 5-phosphate + phosphoenolpyruvate + H2O = 3-deoxy-alpha-D-manno-2-octulosonate-8-phosphate + phosphate. The protein operates within carbohydrate biosynthesis; 3-deoxy-D-manno-octulosonate biosynthesis; 3-deoxy-D-manno-octulosonate from D-ribulose 5-phosphate: step 2/3. It participates in bacterial outer membrane biogenesis; lipopolysaccharide biosynthesis. This Azotobacter vinelandii (strain DJ / ATCC BAA-1303) protein is 2-dehydro-3-deoxyphosphooctonate aldolase.